The sequence spans 189 residues: Interferon alpha-16 (189 aa).

The first 23 residues, 1-23, serve as a signal peptide directing secretion; sequence MALSFSLLMAVLVLSYKSICSLG. Disulfide bonds link Cys-24–Cys-122 and Cys-52–Cys-162.

Belongs to the alpha/beta interferon family.

Its subcellular location is the secreted. Produced by macrophages, IFN-alpha have antiviral activities. Interferon stimulates the production of two enzymes: a protein kinase and an oligoadenylate synthetase. This Homo sapiens (Human) protein is Interferon alpha-16 (IFNA16).